The chain runs to 790 residues: DNA ligase 1 (790 aa).

The N-terminal 64 residues, 1-64 (MLAIRSSNYL…AFDALMSNAR (64 aa)), are a transit peptide targeting the mitochondrion. Residues 64–142 (RAAAKKKTPQ…TGAKKAKTLS (79 aa)) form a disordered region. Positions 68–75 (KKKTPQTT) match the Nuclear localization signal 1 motif. Residues 116-128 (DSANPRSDTSSIA) are compositionally biased toward polar residues. An interaction with target DNA region spans residues 337 to 346 (KLRLGFSGQT). Residue glutamate 442 coordinates ATP. Catalysis depends on lysine 444, which acts as the N6-AMP-lysine intermediate. Residues arginine 449 and arginine 465 each coordinate ATP. Mg(2+) is bound at residue glutamate 497. A Nuclear localization signal 2 motif is present at residues 505–512 (KKKILPFQ). The tract at residues 518–520 (ARK) is interaction with target DNA. Glutamate 596 serves as a coordination point for Mg(2+). ATP-binding residues include lysine 601, arginine 614, and lysine 620. Residues 757-790 (DKKPEEATSSEQIADLYQAQKHNHPSNEVKGDDD) form a disordered region. Positions 781–790 (PSNEVKGDDD) are enriched in basic and acidic residues.

It belongs to the ATP-dependent DNA ligase family. Mg(2+) is required as a cofactor. As to expression, expressed in all vegetative and reproductive tissues.

The protein localises to the mitochondrion. The protein resides in the nucleus. The catalysed reaction is ATP + (deoxyribonucleotide)n-3'-hydroxyl + 5'-phospho-(deoxyribonucleotide)m = (deoxyribonucleotide)n+m + AMP + diphosphate.. Essential protein. DNA ligase that seals nicks in double-stranded DNA during DNA replication, DNA recombination and DNA repair. Involved in repair of both single strand breaks (SSBs) and double strand breaks (DSBs). Required in the endosperm for embryogenesis, probably to repair DNA-breaks generated by DME. This chain is DNA ligase 1 (LIG1), found in Arabidopsis thaliana (Mouse-ear cress).